The primary structure comprises 145 residues: 3-hydroxyacyl-[acyl-carrier-protein] dehydratase FabZ (145 aa).

The active site involves H47.

The protein belongs to the thioester dehydratase family. FabZ subfamily.

Its subcellular location is the cytoplasm. It catalyses the reaction a (3R)-hydroxyacyl-[ACP] = a (2E)-enoyl-[ACP] + H2O. In terms of biological role, involved in unsaturated fatty acids biosynthesis. Catalyzes the dehydration of short chain beta-hydroxyacyl-ACPs and long chain saturated and unsaturated beta-hydroxyacyl-ACPs. This is 3-hydroxyacyl-[acyl-carrier-protein] dehydratase FabZ from Aromatoleum aromaticum (strain DSM 19018 / LMG 30748 / EbN1) (Azoarcus sp. (strain EbN1)).